Here is a 120-residue protein sequence, read N- to C-terminus: uncharacterized protein (120 aa).

The helical transmembrane segment at 19-41 threads the bilayer; it reads YPELFITWCVMTYTFGVAGYMLG. The segment at 57 to 78 is disordered; sequence SKNAHPWEDTKSSSGKSDESLD. Basic and acidic residues predominate over residues 61-75; it reads HPWEDTKSSSGKSDE.

The protein resides in the membrane. This is an uncharacterized protein from Schizosaccharomyces pombe (strain 972 / ATCC 24843) (Fission yeast).